A 331-amino-acid polypeptide reads, in one-letter code: UDP-GalNAc:beta-1,3-N-acetylgalactosaminyltransferase 1 (331 aa).

Over 1 to 20 the chain is Cytoplasmic; the sequence is MAPAVLTAIPNRMSLRSLKW. A helical; Signal-anchor for type II membrane protein membrane pass occupies residues 21 to 43; sequence SLLLLSLLSFLVIWYLSLPHYNV. The Lumenal portion of the chain corresponds to 44–331; sequence IERVNWMYFY…VMLRNTTCHY (288 aa). Asn72, Asn154, Asn198, Asn212, and Asn326 each carry an N-linked (GlcNAc...) asparagine glycan.

It belongs to the glycosyltransferase 31 family. Requires Mg(2+) as cofactor.

The protein resides in the golgi apparatus membrane. The enzyme catalyses a globoside Gb3Cer (d18:1(4E)) + UDP-N-acetyl-alpha-D-galactosamine = a globoside Gb4Cer (d18:1(4E)) + UDP + H(+). The protein operates within protein modification; protein glycosylation. Functionally, transfers N-acetylgalactosamine onto globotriaosylceramide. Plays a critical role in preimplantation stage embryonic development. The chain is UDP-GalNAc:beta-1,3-N-acetylgalactosaminyltransferase 1 (B3galnt1) from Rattus norvegicus (Rat).